The following is a 439-amino-acid chain: Mitochondrial distribution and morphology protein 12 (439 aa).

The 439-residue stretch at 1–439 (MSIDVNWRSA…VYPSFWTFLI (439 aa)) folds into the SMP-LTD domain. Residues 70-85 (YEEDDDDHTSDASEEL) show a composition bias toward acidic residues. Disordered regions lie at residues 70-102 (YEEDDDDHTSDASEELGSEHSSQWNRTHPELNE), 184-274 (SGWS…PPRM), and 353-386 (GSEQQQQQESAGDDHRPQSRPDSSASASQKRHGG). Positions 197-212 (GRSERHAGMKHQRAEP) are enriched in basic and acidic residues. Positions 215–230 (DTSNSTSRPSTANTLP) are enriched in polar residues. The span at 231–240 (SHPSSSSKNS) shows a compositional bias: low complexity. Basic and acidic residues predominate over residues 247 to 261 (RNDHPSLHAGEHIED).

Belongs to the MDM12 family. In terms of assembly, component of the ER-mitochondria encounter structure (ERMES) or MDM complex, composed of mmm1, mdm10, mdm12 and mdm34. A mmm1 homodimer associates with one molecule of mdm12 on each side in a pairwise head-to-tail manner, and the SMP-LTD domains of mmm1 and mdm12 generate a continuous hydrophobic tunnel for phospholipid trafficking.

It is found in the mitochondrion outer membrane. Its subcellular location is the endoplasmic reticulum membrane. Functionally, component of the ERMES/MDM complex, which serves as a molecular tether to connect the endoplasmic reticulum (ER) and mitochondria. Components of this complex are involved in the control of mitochondrial shape and protein biogenesis, and function in nonvesicular lipid trafficking between the ER and mitochondria. Mdm12 is required for the interaction of the ER-resident membrane protein mmm1 and the outer mitochondrial membrane-resident beta-barrel protein mdm10. The mdm12-mmm1 subcomplex functions in the major beta-barrel assembly pathway that is responsible for biogenesis of all mitochondrial outer membrane beta-barrel proteins, and acts in a late step after the SAM complex. The mdm10-mdm12-mmm1 subcomplex further acts in the TOM40-specific pathway after the action of the mdm12-mmm1 complex. Essential for establishing and maintaining the structure of mitochondria and maintenance of mtDNA nucleoids. This chain is Mitochondrial distribution and morphology protein 12, found in Neosartorya fischeri (strain ATCC 1020 / DSM 3700 / CBS 544.65 / FGSC A1164 / JCM 1740 / NRRL 181 / WB 181) (Aspergillus fischerianus).